The primary structure comprises 462 residues: Argininosuccinate lyase (462 aa).

Belongs to the lyase 1 family. Argininosuccinate lyase subfamily.

Its subcellular location is the cytoplasm. The enzyme catalyses 2-(N(omega)-L-arginino)succinate = fumarate + L-arginine. The protein operates within amino-acid biosynthesis; L-arginine biosynthesis; L-arginine from L-ornithine and carbamoyl phosphate: step 3/3. This chain is Argininosuccinate lyase, found in Bacillus cereus (strain ATCC 10987 / NRS 248).